Reading from the N-terminus, the 106-residue chain is Iron-sulfur cluster assembly protein CyaY (106 aa).

It belongs to the frataxin family.

Its function is as follows. Involved in iron-sulfur (Fe-S) cluster assembly. May act as a regulator of Fe-S biogenesis. This Salmonella heidelberg (strain SL476) protein is Iron-sulfur cluster assembly protein CyaY.